The following is a 398-amino-acid chain: Inner membrane protein YjgN (398 aa).

Residues 1–24 (MAQVINEMDVPSHSFVFHGTGERY) are Cytoplasmic-facing. A helical membrane pass occupies residues 25–45 (FLICVVNVLLTIITLGIYLPW). At 46-73 (ALMKCKRYLYANMEVNGQRFSYGITGGN) the chain is on the periplasmic side. A helical transmembrane segment spans residues 74–94 (VFFSCLVFVFFYFAILMTVSA). D95 is a topological domain (cytoplasmic). A helical membrane pass occupies residues 96-116 (MPLIGCVLTLSLLVLLIFMAA). Topologically, residues 117–142 (KGLRYQALMTSLNGVRFSFNCSMKGV) are periplasmic. Residues 143–163 (WWVTFFLPILMAIGMGTVFFI) form a helical membrane-spanning segment. Topologically, residues 164 to 175 (STKMLHANSSSS) are cytoplasmic. Residues 176–196 (VIVSVVLMAIVGIVSIGIFNG) form a helical membrane-spanning segment. Residues 197–228 (TLYSLVMSFLWSNTSFGIHRFKVKLDTAYCIK) are Periplasmic-facing. Residues 229-249 (YAILAFLALLPFLAVAGYIIF) traverse the membrane as a helical segment. The Cytoplasmic segment spans residues 250 to 278 (DQILNAYDSSVYANDDIENLQQFMEMQRK). A helical transmembrane segment spans residues 279-299 (MIIAQLIYYFGIAVSTSYLTV). The Periplasmic portion of the chain corresponds to 300-333 (SLRNHFMSNLSLNDGRIRFRSTLTYHGMLYRMCA). A helical transmembrane segment spans residues 334 to 354 (LVVISGITGGLAYPLLKIWMI). The Cytoplasmic portion of the chain corresponds to 355 to 398 (DWQAKNTYLLGDLDDLPLINKEEQPDKGFLASISRGIMPSLPFL).

It localises to the cell inner membrane. The chain is Inner membrane protein YjgN (yjgN) from Escherichia coli O157:H7.